Here is a 529-residue protein sequence, read N- to C-terminus: PTS system alpha-glucoside-specific EIICB component (529 aa).

One can recognise a PTS EIIC type-1 domain in the interval 1–416 (MMKKVQRFGG…MDLKTPGRED (416 aa)). A run of 12 helical transmembrane segments spans residues 8-28 (FGGA…VVGL), 59-79 (GWTV…ISLA), 91-111 (FALY…FYGI), 130-150 (VPTL…VVYL), 170-190 (VFVY…TVLI), 198-218 (ISAL…IYTF), 222-242 (ILIP…GPAA), 272-292 (GGFA…ALAM), 304-324 (VAAL…TEPL), 328-348 (FLFI…TMAA), 352-372 (AFGV…LNWI), and 380-400 (GTVI…FVVF). In terms of domain architecture, PTS EIIB type-1 spans 450–529 (AQKGAIILEA…ERIEEMMKKG (80 aa)). Cys-472 functions as the Phosphocysteine intermediate; for EIIB activity in the catalytic mechanism.

The protein resides in the cell membrane. Its function is as follows. The phosphoenolpyruvate-dependent sugar phosphotransferase system (sugar PTS), a major carbohydrate active -transport system, catalyzes the phosphorylation of incoming sugar substrates concomitantly with their translocation across the cell membrane. This system is probably involved in transport of the alpha-glucosides trehalulose, turanose, maltulose and palatinose. This Leptotrichia buccalis (strain ATCC 14201 / DSM 1135 / JCM 12969 / NCTC 10249 / C-1013-b) protein is PTS system alpha-glucoside-specific EIICB component.